A 4625-amino-acid chain; its full sequence is Dynein-1-alpha heavy chain, flagellar inner arm I1 complex (4625 aa).

A stem region spans residues 1 to 1919 (MDRRLEWVKE…LIRQCTGLFK (1919 aa)). Residues 70 to 84 (EQAPEAEDGEGEEHD) show a composition bias toward acidic residues. The tract at residues 70 to 163 (EQAPEAEDGE…DEPPAPPAPK (94 aa)) is disordered. Residues 111–140 (EDAPAAAAEANGANPEDEAAAPADGAADGA) are compositionally biased toward low complexity. Positions 144–155 (GGEEGDGAEGDE) are enriched in acidic residues. 960–967 (AGTNSGKS) serves as a coordination point for ATP. 2 coiled-coil regions span residues 1227 to 1259 (EELK…RYRT) and 1339 to 1409 (TVEL…AVRQ). AAA regions lie at residues 1920–2141 (YGYE…VLVM), 2201–2437 (DVVE…RRPK), 2550–2800 (EPPA…IYEG), and 2906–3155 (NFYN…LRRY). ATP-binding positions include 1958 to 1965 (GPAGTGKT), 2242 to 2249 (GQTGGGKT), 2588 to 2595 (GESGTAKS), and 2945 to 2952 (GVGGSGKQ). 2 coiled-coil regions span residues 3192–3297 (LEKL…IRSY) and 3400–3494 (KRKK…LIGD). Residues 3192-3494 (LEKLIQAAVE…ESRRDRLIGD (303 aa)) are stalk. AAA regions lie at residues 3542–3773 (LTSD…EIAE) and 3998–4216 (ITRF…LIST). 3680 to 3687 (GPEISGKT) contacts ATP. Positions 3701–3788 (EQLLNVTLRH…KVTAAEIEET (88 aa)) form a coiled coil.

It belongs to the dynein heavy chain family. The I1 inner arm complex (also known as the f dynein complex) is a two-headed isoform composed of two heavy chains (1-alpha and 1-beta), three intermediate chains and three light chains. I1 occupies a specific position proximal to the first radial spoke and repeats every 96 nm along the length of the axoneme.

The protein resides in the cell projection. The protein localises to the cilium. It is found in the flagellum. It localises to the cytoplasm. Its subcellular location is the cytoskeleton. The protein resides in the flagellum axoneme. Its function is as follows. Force generating protein of eukaryotic cilia and flagella. Produces force towards the minus ends of microtubules. Dynein has ATPase activity; the force-producing power stroke is thought to occur on release of ADP. Required for assembly of the I1 inner arm complex and its targeting to the appropriate axoneme location. Also required for phototaxis. The polypeptide is Dynein-1-alpha heavy chain, flagellar inner arm I1 complex (DHC1) (Chlamydomonas reinhardtii (Chlamydomonas smithii)).